We begin with the raw amino-acid sequence, 352 residues long: MAPLGYFLLLCSLKQALGSYPIWWSLAVGPQYSSLGSQPILCASIPGLVPKQLRFCRNYVEIMPSVAEGIKIGIQECQHQFRGRRWNCTTVHDSLAIFGPVLDKATRESAFVHAIASAGVAFAVTRSCAEGTAAICGCSSRHQGSPGKGWKWGGCSEDIEFGGMVSREFADARENRPDARSAMNRHNNEAGRQAIASHMHLKCKCHGLSGSCEVKTCWWSQPDFRAIGDFLKDKYDSASEMVVEKHRESRGWVETLRPRYTYFKVPTERDLVYYEASPNFCEPNPETGSFGTRDRTCNVSSHGIDGCDLLCCGRGHNARAERRREKCRCVFHWCCYVSCQECTRVYDVHTCK.

An N-terminal signal peptide occupies residues 1–18 (MAPLGYFLLLCSLKQALG). 11 disulfide bridges follow: Cys-77-Cys-88, Cys-128-Cys-136, Cys-138-Cys-155, Cys-203-Cys-217, Cys-205-Cys-212, Cys-281-Cys-312, Cys-297-Cys-307, Cys-311-Cys-351, Cys-327-Cys-342, Cys-329-Cys-339, and Cys-334-Cys-335. Residue Asn-87 is glycosylated (N-linked (GlcNAc...) asparagine). Ser-209 carries O-palmitoleoyl serine; by PORCN lipidation. Asn-298 carries an N-linked (GlcNAc...) asparagine glycan.

This sequence belongs to the Wnt family. As to quaternary structure, forms a soluble 1:1 complex with AFM; this prevents oligomerization and is required for prolonged biological activity. The complex with AFM may represent the physiological form in body fluids. Homooligomer; disulfide-linked, leading to inactivation. Interacts with PORCN. Interacts with APCDD1 and WLS. Component of the Wnt-Fzd-LRP5-LRP6 signaling complex that contains a WNT protein, a FZD protein and LRP5 or LRP6. Interacts directly in the complex with LRP6. Interacts with glypican GPC3. Interacts with PKD1 (via extracellular domain). Interacts with FZD5. In terms of processing, palmitoleoylation by PORCN is required for efficient binding to frizzled receptors. Palmitoleoylation is required for proper trafficking to cell surface, vacuolar acidification is critical to release palmitoleoylated WNT3A from WLS in secretory vesicles. Depalmitoleoylated by NOTUM, leading to inhibit Wnt signaling pathway, possibly by promoting disulfide bond formation and oligomerization. Proteolytic processing by TIKI1 and TIKI2 promotes oxidation and formation of large disulfide-bond oligomers, leading to inactivation of WNT3A. Post-translationally, disulfide bonds have critical and distinct roles in secretion and activity. Loss of each conserved cysteine in WNT3A results in high molecular weight oxidized Wnt oligomers, which are formed through inter-Wnt disulfide bonding. As to expression, moderately expressed in placenta and at low levels in adult lung, spleen, and prostate.

Its subcellular location is the secreted. The protein localises to the extracellular space. The protein resides in the extracellular matrix. In terms of biological role, ligand for members of the frizzled family of seven transmembrane receptors. Functions in the canonical Wnt signaling pathway that results in activation of transcription factors of the TCF/LEF family. Required for normal embryonic mesoderm development and formation of caudal somites. Required for normal morphogenesis of the developing neural tube. Mediates self-renewal of the stem cells at the bottom on intestinal crypts (in vitro). In Homo sapiens (Human), this protein is Protein Wnt-3a (WNT3A).